We begin with the raw amino-acid sequence, 311 residues long: Cytochrome f (311 aa).

Residues 1–27 (MRRHLSLVLGSLVIGLALLIAPGASWA) form the signal peptide. The heme site is built by Y28, C48, C51, and H52. A helical transmembrane segment spans residues 277–297 (IYGLLAFFAAVAIAQIMLVLK).

The protein belongs to the cytochrome f family. As to quaternary structure, the 4 large subunits of the cytochrome b6-f complex are cytochrome b6, subunit IV (17 kDa polypeptide, PetD), cytochrome f and the Rieske protein, while the 4 small subunits are PetG, PetL, PetM and PetN. The complex functions as a dimer. Requires heme as cofactor.

Its subcellular location is the cellular thylakoid membrane. Its function is as follows. Component of the cytochrome b6-f complex, which mediates electron transfer between photosystem II (PSII) and photosystem I (PSI), cyclic electron flow around PSI, and state transitions. The chain is Cytochrome f from Synechococcus sp. (strain CC9902).